Here is a 233-residue protein sequence, read N- to C-terminus: Protein Thf1 (233 aa).

Positions Asp-183 to Val-205 form a coiled coil. Positions Asp-213–Glu-233 are disordered.

It belongs to the THF1 family.

May be involved in photosynthetic membrane biogenesis. The protein is Protein Thf1 of Trichormus variabilis (strain ATCC 29413 / PCC 7937) (Anabaena variabilis).